Here is a 352-residue protein sequence, read N- to C-terminus: Alanine racemase (352 aa).

Residue Lys33 is the Proton acceptor; specific for D-alanine of the active site. Lys33 carries the N6-(pyridoxal phosphate)lysine modification. Arg129 serves as a coordination point for substrate. The Proton acceptor; specific for L-alanine role is filled by Tyr250. Residue Met298 coordinates substrate.

This sequence belongs to the alanine racemase family. The cofactor is pyridoxal 5'-phosphate.

The catalysed reaction is L-alanine = D-alanine. Its pathway is amino-acid biosynthesis; D-alanine biosynthesis; D-alanine from L-alanine: step 1/1. In terms of biological role, catalyzes the interconversion of L-alanine and D-alanine. May also act on other amino acids. This is Alanine racemase (alr) from Neisseria meningitidis serogroup C / serotype 2a (strain ATCC 700532 / DSM 15464 / FAM18).